We begin with the raw amino-acid sequence, 192 residues long: Bifunctional protein PyrR (192 aa).

Residues S49–G50, R90, D111–T119, R144, and V168 each bind substrate. Positions V107 to T119 match the PRPP-binding motif.

It belongs to the purine/pyrimidine phosphoribosyltransferase family. PyrR subfamily.

It carries out the reaction UMP + diphosphate = 5-phospho-alpha-D-ribose 1-diphosphate + uracil. Functionally, regulates the transcription of the pyrimidine nucleotide (pyr) operon in response to exogenous pyrimidines. Also displays a weak uracil phosphoribosyltransferase activity which is not physiologically significant. The protein is Bifunctional protein PyrR of Corynebacterium glutamicum (strain ATCC 13032 / DSM 20300 / JCM 1318 / BCRC 11384 / CCUG 27702 / LMG 3730 / NBRC 12168 / NCIMB 10025 / NRRL B-2784 / 534).